The following is a 1276-amino-acid chain: Histone-lysine N-methyltransferase PRDM16 (1276 aa).

Over residues 1–10 (MRSKARARKL) the composition is skewed to basic residues. The tract at residues 1–68 (MRSKARARKL…DFTPKEGSPY (68 aa)) is disordered. Residues 82–211 (ADFELRESSI…PGEELLVHVK (130 aa)) enclose the SET domain. The C2H2-type 1; atypical zinc finger occupies 230–253 (FRCDECDELFQSKLDLRRHKKYTC). C2H2-type zinc fingers lie at residues 281–303 (HECKDCERMFPNKYSLEQHMVIH), 309–331 (YKCDQCPKAFNWKSNLIRHQMSH), 337–360 (FECENCVKVFTDPSNLQRHIRSQH), 366–388 (HACPDCGKTFATSSGLKQHKHIH), and 394–416 (FICEVCHKSYTQFSNLCRHKRMH). Residues 423–445 (IKCKDCGQMFSTTSSLNKHRRFC) form a C2H2-type 7; atypical zinc finger. 2 disordered regions span residues 533 to 657 (SLLK…APPG) and 772 to 804 (PFDLTTKPKDVKPILPMPKGPSAPASGEEQPLD). A compositionally biased stretch (polar residues) spans 561 to 570 (AVSNSSQGTT). Over residues 575 to 597 (PEEKFESRLEDSCVEKLKTRSSD) the composition is skewed to basic and acidic residues. Residues 609–624 (TTTGTDLDTTTGTGSD) show a composition bias toward low complexity. Residues 632-642 (DPDKDKGKGKS) are compositionally biased toward basic and acidic residues. The interaction with CTBP1, CTBP2 and ZNF516 stretch occupies residues 679–1038 (DEQLLTATGA…KHEHENAPVS (360 aa)). A mediates interaction with SKI and regulation of TGF-beta signaling region spans residues 739-1276 (PFTDRALAHN…SGAFHPINHL (538 aa)). 3 C2H2-type zinc fingers span residues 951 to 973 (YTCRYCGKIFPRSANLTRHLRTH), 979 to 1002 (YRCKYCDRSFSISSNLQRHVRNIH), and 1008 to 1032 (FKCHLCNRCFGQQTNLDRHLKKHEH). Disordered stretches follow at residues 1033 to 1065 (ENAPVSQHPGVLTNHLGTSASSPTSESDNHALL) and 1105 to 1163 (AQCP…EPAA). A compositionally biased stretch (polar residues) spans 1047–1058 (HLGTSASSPTSE). Positions 1116 to 1133 (EDVEEEDDDDLEEDDEDS) are enriched in acidic residues.

It belongs to the PRDM16 family. As to quaternary structure, interacts with CEBPA, CEBPB and CEBPD; the interaction is direct. Interacts with PPARG and PPARA; controls brown adipocytes differentiation. Interacts with CTBP1 and CTBP2; represses the expression of WAT-specific genes. Interacts with PPARGC1A and PPARGC1B; interaction with PPARGC1A or PPARGC1B activates the transcription of BAT-specific gene. Interacts with HDAC1, SKI, SMAD2 and SMAD3; the interaction with SKI promotes the recruitment of SMAD3-HDAC1 complex on the promoter of TGF-beta target genes. Interacts with ZNF516; the interaction is direct and may play a role in the transcription of brown adipose tissue-specific gene. Expressed in uterus and kidney. Expressed in both cardiomyocytes and interstitial cells.

The protein localises to the nucleus. It is found in the cytoplasm. It carries out the reaction L-lysyl(9)-[histone H3] + S-adenosyl-L-methionine = N(6)-methyl-L-lysyl(9)-[histone H3] + S-adenosyl-L-homocysteine + H(+). Binds DNA and functions as a transcriptional regulator. Displays histone methyltransferase activity and monomethylates 'Lys-9' of histone H3 (H3K9me1) in vitro. Probably catalyzes the monomethylation of free histone H3 in the cytoplasm which is then transported to the nucleus and incorporated into nucleosomes where SUV39H methyltransferases use it as a substrate to catalyze histone H3 'Lys-9' trimethylation. Likely to be one of the primary histone methyltransferases along with MECOM/PRDM3 that direct cytoplasmic H3K9me1 methylation. Functions in the differentiation of brown adipose tissue (BAT) which is specialized in dissipating chemical energy in the form of heat in response to cold or excess feeding while white adipose tissue (WAT) is specialized in the storage of excess energy and the control of systemic metabolism. Together with CEBPB, regulates the differentiation of myoblastic precursors into brown adipose cells. Functions as a repressor of TGF-beta signaling. In terms of biological role, binds DNA and functions as a transcriptional regulator. Functions as a repressor of TGF-beta signaling. May regulate granulocyte differentiation. This is Histone-lysine N-methyltransferase PRDM16 from Homo sapiens (Human).